A 317-amino-acid chain; its full sequence is Methionyl-tRNA formyltransferase (317 aa).

109–112 contributes to the (6S)-5,6,7,8-tetrahydrofolate binding site; sequence SLLP.

It belongs to the Fmt family.

The enzyme catalyses L-methionyl-tRNA(fMet) + (6R)-10-formyltetrahydrofolate = N-formyl-L-methionyl-tRNA(fMet) + (6S)-5,6,7,8-tetrahydrofolate + H(+). In terms of biological role, attaches a formyl group to the free amino group of methionyl-tRNA(fMet). The formyl group appears to play a dual role in the initiator identity of N-formylmethionyl-tRNA by promoting its recognition by IF2 and preventing the misappropriation of this tRNA by the elongation apparatus. The protein is Methionyl-tRNA formyltransferase of Halalkalibacterium halodurans (strain ATCC BAA-125 / DSM 18197 / FERM 7344 / JCM 9153 / C-125) (Bacillus halodurans).